The following is a 112-amino-acid chain: Putative RNase TTE0752 (112 aa).

Residues R74 and H79 contribute to the active site. The RX(4)HXY motif motif lies at R74–Y81. Position 81 is an O-di-AMP-tyrosine (Y81).

Belongs to the HepT RNase toxin family. In terms of assembly, homodimer, probably forms a complex with cognate antitoxin TTE0751. In terms of processing, modified by cognate antitoxin TTE0751; probably at least 2 successive AMPylation events occur on Tyr-81.

Functionally, probable toxic component of a putative type VII toxin-antitoxin (TA) system, probably an RNase. Probably neutralized by cognate antitoxin TTE0751. Neutralization may be due to AMPylation by TTE0751. This is Putative RNase TTE0752 from Caldanaerobacter subterraneus subsp. tengcongensis (strain DSM 15242 / JCM 11007 / NBRC 100824 / MB4) (Thermoanaerobacter tengcongensis).